The following is an 87-amino-acid chain: Small ribosomal subunit protein bS20 (87 aa).

Positions 1-22 are disordered; the sequence is MANTSQARKRARQAGVRRVRNA. The segment covering 7–20 has biased composition (basic residues); the sequence is ARKRARQAGVRRVR.

The protein belongs to the bacterial ribosomal protein bS20 family.

Binds directly to 16S ribosomal RNA. This chain is Small ribosomal subunit protein bS20, found in Nitrosococcus oceani (strain ATCC 19707 / BCRC 17464 / JCM 30415 / NCIMB 11848 / C-107).